We begin with the raw amino-acid sequence, 103 residues long: MNTIQVILFAVVLVLTVTVGQADEDSAETSLLRKLEEAEASMFGQYLEESKNSREKRCAVENVPCDKDRPGCCREYECLKPTGYGWWYGSYYCYKKKERLIST.

Residues 1–22 form the signal peptide; the sequence is MNTIQVILFAVVLVLTVTVGQA. The propeptide occupies 23-57; the sequence is DEDSAETSLLRKLEEAEASMFGQYLEESKNSREKR. Cystine bridges form between cysteine 58–cysteine 73, cysteine 65–cysteine 78, and cysteine 72–cysteine 93.

The protein belongs to the neurotoxin 14 (magi-1) family. 08 (Ltx-4) subfamily. As to expression, expressed by the venom duct.

It localises to the secreted. Its function is as follows. Shows a weak inhibition on the voltage-gated calcium channel Cav2.1/CACNA1A and some voltage-gated sodium channels (with 1 uM toxin tested: 22.08% inhibition on Cav2.1/CACNA1A, 6.6% on Nav1.1/SCN1A, 4.2% on Nav1.5, and 16% on Nav1.7). Functionally, shows a weak inhibition on the voltage-gated calcium channel Cav2.1/CACNA1A (28.06% at 1 uM). This is Omega toxin Ap5 from Acanthoscurria paulensis (Brazilian giant black tarantula spider).